The primary structure comprises 1888 residues: MVRERKCILCHIVYGSKKEMDEHMRSMLHHRELENLKGRDISHECRVCRVTEVGLSAYAKHISGQLHKDNVDAQEREDDGKEEEEEEYFDKELVQLIQERKEQSRQDEPPSNSQEVNSDDRQPQWRREDRIPYQDRESYSQPPRHHRGPPQRDWKWEKDGFNSTRKNSFPHSLRNSGGPRGSSVWHKGATRGSSTWFLNHSNSGGGWHSNNGMVDWNYNGTGRNSSWHSEGTGGFPSWHMNNSNGNWKSSVRGTNSWNYNGLGDKFQQGRNRNPNYQMEDMTKMWNKKSNKPSKYSQERCKWQRQDRDKAAKYRSPPEGYASDTFPSEGLLEFNFEQRESQTTKQTDTAASKINGKNGTKARDKFRRWTPYPSQKTLDLQSALKEVIGSKSDTLEKPLFNFSLITAGLRKPVDKTSNPPVIKTQKAGPPGSPSHKAISDGTAFCEVARACSITEQSEPHQKSNKIPLLKSPLLPLPTPKSGPHKQNLKNRSKNKETKSFPSGDHSHLLNTSTLEGSHGSSYTSKSLGLCPRVLKENKTVSGTQKEPDEKLNNTSQKAQDTVLQCPKTLQNPLPTTPKRMENDAKESSVEESAKDSLSIESQPHSAGNSAMTSDAENHGIKSEGVASLTTEVVSCSTHTVDKEQGSQIPGTPENLSTSPRNSTVLQKEAEVQVSAATSPHSGLLLDLKTSLEDAQDNNLVKSDGPFETESFEDTSLDTELQKPDLNNQPPGTLLPELSKLGFPASLQRDLSRHISLKSKTGTHLPEPNLNSARRIRNVSGHRKNETEKESGLKPTLRQILNASRRNVNWEQVIQQVTKKKQELGKGLPRFGIEMVPLVQNEQEVLDLDEEPDLSSLEGFQWEGVSIPSSSGLARKRSLSESSVVMDRAPVYSFFTGEGTGKENEAQQSPSPNTALSAAQSQKTAMYLEQEVAPLTPSVGTGERVGNIPTQRRHSAQLPSGHIMPVMHSARDLHSQERSTPLSERHAQESTGEGNSLSSNASSGHAVSSLADAATDSSCTSGAEQTDGHSIRKKRRATGDGSSPELPSLERKNKRRKIKGKKERSQVDQLLTISLREEELSKSLQCMDNKLLQARAALQTAYVEVQRLLVLKQQITVEMSALRTHRIQILQGLQETYEPPEHPDQAPCSLISREQRNSRSQTSFETALLPAPFFPGFLDPPPSHASLPSPGNPLQITMSTFQAHGTAPDSSVQIKQEPMSPEQEGNMNALPQGCASNVSKELLQTNRVVDDGSSVYPAIPAVIASESTENCQEVSKDLNFSVEQGNSRSKGNSPSCQSPDLPGINRGEETAKGSSGSEACSSSFLRLSFTPETPAEKETQSPADQPEQQAESTLASAETRGSKKKKKLRKKKTLRATHVPENSDTEQDVFTAKPARKVKTAKAAKGAKVTTSQTGQEQGTARDEPDSDSSLEVLEVTNPQLEVVAIDTSESGDEKPDSPSKKDAWIAAEQNPIETSRSGCDEVSSTSELGTRYKDGVPVSVAETQTVISIKASKHSSEISSEPGDDEEPTEGSFEGHQAAVNAIQIFGNFLYTCSADTTVRVYNLVSRKCVGVFEGHTSKVNCLLVTHTSGKSSVLYTGSSDHTIRCYNIKTRECMEQLQLEDRVLCLHNRWRTLYAGLANGTVVTFDIKNNKRQEIFECHGPRAVSCLATAQEGARKLLVVGSYDCTISVRDARNGLLLRTLEGHSKTVLCMKVVNDLVFSGSSDQSVHAHNIHTGELVRIYKGHNHAVTVVNILGKVMVTACLDKFVRVYELQSHDRLQVYGGHKDMIMCMTIHKSVIYTGCYDGSIQAVRLNLMQNYRCWWYGCTLIFGVVDHLKQHLLTDHTNPNFQTLKCRWRNCDAFFTARKGSKQDVAGHIERHAEDDSKIDS.

The C2H2-type 1; atypical zinc-finger motif lies at 5-29; sequence RKCILCHIVYGSKKEMDEHMRSMLH. The C2H2-type 2; atypical zinc finger occupies 43–67; sequence HECRVCRVTEVGLSAYAKHISGQLH. The disordered stretch occupies residues 68 to 187; it reads KDNVDAQERE…GPRGSSVWHK (120 aa). The segment covering 75-89 has biased composition (acidic residues); that stretch reads EREDDGKEEEEEEYF. Composition is skewed to basic and acidic residues over residues 90 to 108, 118 to 138, and 150 to 160; these read DKEL…RQDE, SDDR…DRES, and PQRDWKWEKDG. Residue Lys-91 forms a Glycyl lysine isopeptide (Lys-Gly) (interchain with G-Cter in SUMO2) linkage. Residue Lys-155 forms a Glycyl lysine isopeptide (Lys-Gly) (interchain with G-Cter in SUMO2) linkage. The span at 161 to 175 shows a compositional bias: polar residues; the sequence is FNSTRKNSFPHSLRN. Glycyl lysine isopeptide (Lys-Gly) (interchain with G-Cter in SUMO2) cross-links involve residues Lys-265 and Lys-309. 2 disordered regions span residues 287–326 and 338–362; these read KKSN…DTFP and RESQ…TKAR. The span at 296 to 311 shows a compositional bias: basic and acidic residues; it reads SQERCKWQRQDRDKAA. A compositionally biased stretch (polar residues) spans 342–357; it reads TTKQTDTAASKINGKN. Residues Lys-375, Lys-384, Lys-390, Lys-435, Lys-469, and Lys-479 each participate in a glycyl lysine isopeptide (Lys-Gly) (interchain with G-Cter in SUMO2) cross-link. Disordered regions lie at residues 410–437 and 453–525; these read KPVD…HKAI and TEQS…TSKS. Residues 481–491 are compositionally biased toward basic residues; the sequence is GPHKQNLKNRS. The span at 507–525 shows a compositional bias: polar residues; it reads LLNTSTLEGSHGSSYTSKS. Glycyl lysine isopeptide (Lys-Gly) (interchain with G-Cter in SUMO2) cross-links involve residues Lys-524, Lys-534, and Lys-544. A disordered region spans residues 537 to 617; sequence KTVSGTQKEP…SAMTSDAENH (81 aa). Residues 551 to 572 show a composition bias toward polar residues; that stretch reads NNTSQKAQDTVLQCPKTLQNPL. Lys-577 participates in a covalent cross-link: Glycyl lysine isopeptide (Lys-Gly) (interchain with G-Cter in SUMO2). Basic and acidic residues predominate over residues 577–593; it reads KRMENDAKESSVEESAK. A compositionally biased stretch (polar residues) spans 597–613; sequence SIESQPHSAGNSAMTSD. Lys-620 participates in a covalent cross-link: Glycyl lysine isopeptide (Lys-Gly) (interchain with G-Cter in SUMO2). A disordered region spans residues 635 to 661; that stretch reads STHTVDKEQGSQIPGTPENLSTSPRNS. A compositionally biased stretch (polar residues) spans 644 to 661; sequence GSQIPGTPENLSTSPRNS. 2 positions are modified to phosphoserine: Ser-657 and Ser-677. Residues Lys-687, Lys-700, Lys-721, Lys-738, Lys-758, Lys-792, and Lys-824 each participate in a glycyl lysine isopeptide (Lys-Gly) (interchain with G-Cter in SUMO2) cross-link. Residues 696–728 are disordered; that stretch reads NNLVKSDGPFETESFEDTSLDTELQKPDLNNQP. Ser-876, Ser-878, Ser-881, and Ser-909 each carry phosphoserine. Residues 894-920 are disordered; that stretch reads TGEGTGKENEAQQSPSPNTALSAAQSQ. Polar residues predominate over residues 904–920; sequence AQQSPSPNTALSAAQSQ. Residue Lys-921 forms a Glycyl lysine isopeptide (Lys-Gly) (interchain with G-Cter in SUMO2) linkage. Ser-953 carries the phosphoserine modification. The span at 968-986 shows a compositional bias: basic and acidic residues; sequence ARDLHSQERSTPLSERHAQ. Disordered stretches follow at residues 968–1064, 1281–1461, and 1468–1487; these read ARDL…ERSQ, EQGN…SKKD, and QNPI…TSEL. Positions 992 to 1008 are enriched in low complexity; the sequence is GNSLSSNASSGHAVSSL. The span at 1013–1022 shows a compositional bias: polar residues; that stretch reads TDSSCTSGAE. Position 1036 is a phosphothreonine (Thr-1036). Phosphoserine occurs at positions 1040, 1041, and 1046. Residues 1050 to 1060 show a composition bias toward basic residues; sequence KNKRRKIKGKK. Polar residues predominate over residues 1281–1296; the sequence is EQGNSRSKGNSPSCQS. Phosphoserine occurs at positions 1291, 1293, and 1296. Lys-1310 is covalently cross-linked (Glycyl lysine isopeptide (Lys-Gly) (interchain with G-Cter in SUMO2)). Low complexity predominate over residues 1312 to 1321; sequence SSGSEACSSS. Ser-1313 is modified (phosphoserine). Lys-1335 participates in a covalent cross-link: Glycyl lysine isopeptide (Lys-Gly) (interchain with G-Cter in SUMO2). Positions 1338–1354 are enriched in polar residues; sequence QSPADQPEQQAESTLAS. Ser-1339 is modified (phosphoserine). A compositionally biased stretch (basic residues) spans 1360-1373; it reads SKKKKKLRKKKTLR. Ser-1381 bears the Phosphoserine mark. Thr-1383 carries the phosphothreonine modification. Residues Lys-1391, Lys-1403, Lys-1406, and Lys-1460 each participate in a glycyl lysine isopeptide (Lys-Gly) (interchain with G-Cter in SUMO2) cross-link. A compositionally biased stretch (basic and acidic residues) spans 1450–1461; it reads GDEKPDSPSKKD. Positions 1470-1487 are enriched in polar residues; that stretch reads PIETSRSGCDEVSSTSEL. Ser-1474 is subject to Phosphoserine. Residues Lys-1492 and Lys-1509 each participate in a glycyl lysine isopeptide (Lys-Gly) (interchain with G-Cter in SUMO2) cross-link. A disordered region spans residues 1509–1531; that stretch reads KASKHSSEISSEPGDDEEPTEGS. WD repeat units lie at residues 1534 to 1573, 1575 to 1618, 1659 to 1700, 1703 to 1742, 1743 to 1780, and 1783 to 1820; these read GHQA…GVFE, HTSK…EQLQ, HGPR…LLRT, GHSK…RIYK, GHNH…RLQV, and GHKD…NYRC. A Glycyl lysine isopeptide (Lys-Gly) (interchain with G-Cter in SUMO2) cross-link involves residue Lys-1590. A Glycyl lysine isopeptide (Lys-Gly) (interchain with G-Cter in SUMO2) cross-link involves residue Lys-1742. A C2H2-type 3; atypical zinc finger spans residues 1818-1843; the sequence is YRCWWYGCTLIFGVVDHLKQHLLTDH. Residue Lys-1869 forms a Glycyl lysine isopeptide (Lys-Gly) (interchain with G-Cter in SUMO2) linkage.

As to quaternary structure, interacts with KNOP1. Interacts with TARDBP and NUP107. Interacts (via N-terminus) with RBM39. Interacts with the SH3 domains of FYN and GRB2. Post-translationally, phosphorylated by FYN in vitro. Widely expressed, with strongest expression in skeletal muscle, heart and brain (at protein level). Detected in spinal cord motor neurons.

Its subcellular location is the nucleus. The protein resides in the nucleolus. It localises to the nucleus speckle. RNA-binding protein. Specifically binds to 5'-GGGGCC-3' sequence repeats in RNA. Essential for maintenance of peripheral motor neuron and skeletal muscle function. Required for normal expression and/or alternative splicing of a number of genes in spinal cord and skeletal muscle, including the neurite outgrowth inhibitor RTN4. Also contributes to normal mitochondrial respiratory function in motor neurons, via an unknown mechanism. The polypeptide is Zinc finger protein 106 (Znf106) (Mus musculus (Mouse)).